Here is a 554-residue protein sequence, read N- to C-terminus: Chaperonin GroEL (554 aa).

ATP is bound by residues 30 to 33, Lys-51, 87 to 91, Gly-415, 478 to 480, and Asp-494; these read TLGP, DGTTT, and DAA.

It belongs to the chaperonin (HSP60) family. In terms of assembly, forms a cylinder of 14 subunits composed of two heptameric rings stacked back-to-back. Interacts with the co-chaperonin GroES.

It localises to the cytoplasm. It carries out the reaction ATP + H2O + a folded polypeptide = ADP + phosphate + an unfolded polypeptide.. In terms of biological role, together with its co-chaperonin GroES, plays an essential role in assisting protein folding. The GroEL-GroES system forms a nano-cage that allows encapsulation of the non-native substrate proteins and provides a physical environment optimized to promote and accelerate protein folding. The sequence is that of Chaperonin GroEL from Pelobacter propionicus (strain DSM 2379 / NBRC 103807 / OttBd1).